The following is a 148-amino-acid chain: Large ribosomal subunit protein bL9 (148 aa).

It belongs to the bacterial ribosomal protein bL9 family.

Binds to the 23S rRNA. The polypeptide is Large ribosomal subunit protein bL9 (Pelotomaculum thermopropionicum (strain DSM 13744 / JCM 10971 / SI)).